Consider the following 115-residue polypeptide: Sericin-1 (115 aa).

Positions 1 to 115 (GSSGSSGSSG…GGSSSTSSSN (115 aa)) are disordered.

As to expression, produced exclusively in the middle (MSG) section of silk glands.

The protein resides in the secreted. In terms of biological role, provides the silk fibroin thread with a sticky coating. Acts as a cement by sticking silk threads together. The protein is Sericin-1 (SER1) of Galleria mellonella (Greater wax moth).